Here is a 2662-residue protein sequence, read N- to C-terminus: MESSVAVEGAGGPSTYFKGSSAALSRLVSTETTASDFCRSQLPTSRPPTDPPVSPTAEATDAFSRVSTSSRPLITGRVSTMRAASLSRSTALSASLRPRPPYDERSSSFHSECQAGEEGGPGASRRMHRSLAGSAESRAEREGSSFRLDTEKPFSRDGNIPSYAPSMSDSLKGGASGLSSPLLQRSRSDRRTGLRGESRTCDSEAASAESRFFSSSRYDPERTDRARDADLFERGSQLDSIPLSNRRPGTDPVSSEHLRESRRTVTAAVSDFLEDSRRGVYKDDQMWGFEQASFAEDKPGLAASASVRQEKLDPYLSRSSQGSSQGSGEPVSRNLRVSGEKQSSSTRAMASRHETSVLTSNSDRREERVAYLSCADEEDLASRRESEGNVQVSRESRHAVPSSQRLEPIERIHRKGGAALRESLGSRFDPKDITGRFLDSSSSEVPASARTQALGTDLHSRPRGLGSEMSSSRVAFYDSGREAGGLSSQRADGRRTGEESREGEDGRTGRKEDAVETRWGSSLGLSGESSGNTSLRRKQAEGVNETRSQATEPNGEASLFSPFGSGRMQSSEVPRRGEKQRHFSSLEISSARQEREPMAHTSVLASRPSFLPPSFSLGASETSTDRVLGGSTRPPCLEEGKPLRSELLAAELGEGGTERSTSLLHSAASPSSVSRRPRLLTAVDSPPREREDHVVPRETKTRLGDESGETRHALNRPAGLHGSTGFGVEASADLRGESGGRSSDGSRIRSSSSSAVSHLSQVSLPPLPRGRAGDEALSREEESGGRSGRQKRDREATLLHASSIFRSTVPLRPSVRSFSQPAASAGSDVVSPRSRHARDFDSLSRVAKTPQTEVGGESFRLYGKNPSSAPSALGAKETFLNSRGDDTEETNGDKDAKRGATVPAVNGGELGALPRVPAAGAEGLRGLSSRMSREVSSAYQPPQPPSAEECGASLQVSLDREQLGGNSGRSTRSNSLVSRIETGLSMPRSASGTTHASLLASNAGNAKSDTLGKGPTECVCQASRYMTRQKVHYEQQMKRVEEEREQQRQRRRILAEQEAQVALLQSQVQRQREGVVEEEKQLREMRAQLTAEREAMETRWQQLEKQHQELAEKKEKWRKTAQHKRDELQAFSHRIRADKKELDEKKKEVARDTTSLKDKVESVEKEQDRLNRERVELEEVRFALDREKAELDARISATEDERHRLKKKEEELIRRETKAQSKEDELRREQLEVEKRTQAVSLKAEEEEQKELDRVSLWRQKNEELDRRARLVHEQETDLDARTHALRMQETERKREDEREKKKLQQMQETFLEDKKSFAREKGRVEAQLDEEKKRLVEEKKTLEEARGKWEEERRREHAEFERKKKVWEEERSARVAELAAKEEAVREKEKLLEEEENRRREEMKKLTQELRDEKEQIARQLDADREDMRARLGAEREKLHEERLRGEEELQKERERLETQMEHLKEKERELEGAQNRWKEEQATVESRLREAEEKVLRDREVLAQEREAFEEEVRREREQFHEEQEAVLAEFRAQRQMAERELAEQKEQQEEMLEEERQRLLQAEERQQETYAEQMNQLRNLEEQLHQQKLHHQQDVSRHLEREEALFERERRLREEDQSVQDEKQKLSKEKQAVGQQWRQLEETQSQQKQEEASLKKEREALEDKTRDLRDQVQRVAEVDEKLARLREAEDALEIERAALEAEKESFRREKELIDAQVGAWRRKLSQREQEVGRRERAASTRLRDIETQEKVHRVRMEEDGNVVNRGVKQTASGALTIRRGPSLASGRAPSVSRQPLARERGGDTVTREEAAKEREEKKPGTNARTRCLSTERRREQKGNVSAGGPKVSAGRRTVTPAEDHGRGRSATKRGQDAGGREGEEGETKSANGDGGRNRKRPGAAVRESSSGDQHTTGGKNGKEFGKRNGVDRVSGLLPALRGQKSVAAVSSTRASSVACDGDEHETETERSIQGTTKSPTQALLSSPDRSDLPPQKSAPFSLSGSPQVSLATKGLTEHTRGASDRAEEGEEEAERKDRNRGRLLHSSRTTAEAKPSSQLHRTPFLDEEESVSSVSAGRTRAGESVPEATERGRRKEQREQGDSERKTESGSSRGVVDGSGSARVWENRERRSRLESEERQEDRRRETGEDEVVFQNIFEPGNSSTFARETFPRISHLAASRQSCSSSGLSHPLPASSASRQSPEKAGRASSSTYSPYTFRYSSFLKQQASSLTEEGDREGEEAKRRNPSNEPEMSGSPCLSFAEKSSASEGRPFSSRCPELLPTSASPERQAEDDGKQATRVSPSFSSQSSLCVSPVSLNGLSLGTLDRSRVTRSQETLEEGENEVSATRDVGARNGGQAEKRSTVSLNRQGPSAPSSSSFCSSYSLPQAASRISASVLRREERSMLSVERNGEDETERRRHEEHREVSVVGGGSSSLSSQTRVNEIVYRREGTGAHAKRGRGDSECVLSGKRDGFSGRETLSRTPLTSPSGVVGQERSVLSRAGCKEQEKEGRTSQASPHQLQSPRSRQAWKDRLAAACAPRTSVPLEEAEDDTEVGSPFLNSLRSQRNTRKEGESSFFSSSVYRRREEDERRSKGTLIRKNGEAGSAGSFNARESVISHLSAFNSAEDNSDCGSGENSSLSGLGSSTRISTGRGKSSLSGR.

2 coiled-coil regions span residues 1030-1248 and 1281-1719; these read KVHY…EEEE and ARTH…IDAQ.

Its subcellular location is the cytoplasm. It is found in the cytoskeleton. The protein localises to the microtubule organizing center. The protein resides in the centrosome. Part of the centrosome inner core complex. Plays a role in the formation and/or stabilization of the mitotic spindle. Required for proper nuclear segregation and DNA partitioning during cell division. This is Centrosome-associated protein CEP250L1 from Toxoplasma gondii (strain ATCC 50611 / Me49).